The following is a 343-amino-acid chain: Dual oxidase maturation factor 1 (343 aa).

The Extracellular segment spans residues 1 to 24 (MATLGHTFPFYAGPKPTFPMDTTL). The helical transmembrane segment at 25–45 (ASIIMIFLTALATFIVILPGI) threads the bilayer. At 46–51 (RGKTRL) the chain is on the cytoplasmic side. The helical transmembrane segment at 52-72 (FWLLRVVTSLFIGAAILAVNF) threads the bilayer. Over 73 to 183 (SSEWSVGQVS…RLAGHYTSAM (111 aa)) the chain is Extracellular. 3 N-linked (GlcNAc...) asparagine glycosylation sites follow: asparagine 84, asparagine 109, and asparagine 121. A helical membrane pass occupies residues 184-204 (LWVAFLCWLLANVMLSMPVLV). The Cytoplasmic segment spans residues 205–206 (YG). A helical membrane pass occupies residues 207 to 227 (GYMLLATGIFQLLALLFFSMA). The Extracellular portion of the chain corresponds to 228 to 249 (TSLTSPCPLHLGASVLHTHHGP). Residues 250-270 (AFWITLTTGLLCVLLGLAMAV) form a helical membrane-spanning segment. At 271–343 (AHRMQPHRLK…AHPKDPDCAL (73 aa)) the chain is on the cytoplasmic side. The disordered stretch occupies residues 306–343 (RYRSMADSPKSQDIPLSEASSTKAYCKEAHPKDPDCAL). Basic and acidic residues predominate over residues 330–343 (YCKEAHPKDPDCAL).

It belongs to the DUOXA family. In terms of assembly, may interact with NUMB. As to expression, specifically expressed in thyroid gland. Also detected in esophagus.

It is found in the membrane. May be required for the maturation and the transport from the endoplasmic reticulum to the plasma membrane of functional DUOX1. The polypeptide is Dual oxidase maturation factor 1 (DUOXA1) (Homo sapiens (Human)).